The primary structure comprises 189 residues: UPF0301 protein A1C_00165 (189 aa).

The protein belongs to the UPF0301 (AlgH) family.

The sequence is that of UPF0301 protein A1C_00165 from Rickettsia akari (strain Hartford).